Reading from the N-terminus, the 206-residue chain is Small ribosomal subunit protein uS4 (206 aa).

Residues 96-156 (GRLDNVVYRM…EKSKKQARIK (61 aa)) enclose the S4 RNA-binding domain.

This sequence belongs to the universal ribosomal protein uS4 family. Part of the 30S ribosomal subunit. Contacts protein S5. The interaction surface between S4 and S5 is involved in control of translational fidelity.

Functionally, one of the primary rRNA binding proteins, it binds directly to 16S rRNA where it nucleates assembly of the body of the 30S subunit. Its function is as follows. With S5 and S12 plays an important role in translational accuracy. The sequence is that of Small ribosomal subunit protein uS4 from Glaesserella parasuis serovar 5 (strain SH0165) (Haemophilus parasuis).